Here is a 372-residue protein sequence, read N- to C-terminus: Aminomethyltransferase (372 aa).

Belongs to the GcvT family. As to quaternary structure, the glycine cleavage system is composed of four proteins: P, T, L and H.

It catalyses the reaction N(6)-[(R)-S(8)-aminomethyldihydrolipoyl]-L-lysyl-[protein] + (6S)-5,6,7,8-tetrahydrofolate = N(6)-[(R)-dihydrolipoyl]-L-lysyl-[protein] + (6R)-5,10-methylene-5,6,7,8-tetrahydrofolate + NH4(+). In terms of biological role, the glycine cleavage system catalyzes the degradation of glycine. The chain is Aminomethyltransferase from Burkholderia mallei (strain NCTC 10247).